A 247-amino-acid chain; its full sequence is UPF0259 membrane protein BUAP5A_271 (247 aa).

A run of 6 helical transmembrane segments spans residues 20–40 (IGAI…IDMF), 85–105 (IMES…LISV), 114–134 (IVSS…LNFL), 137–157 (FIIQ…SIIL), 188–208 (IIGP…MLLA), and 218–238 (LFLI…IYLF).

It belongs to the UPF0259 family.

It localises to the cell membrane. The polypeptide is UPF0259 membrane protein BUAP5A_271 (Buchnera aphidicola subsp. Acyrthosiphon pisum (strain 5A)).